A 36-amino-acid chain; its full sequence is Photosystem I reaction center subunit VIII (36 aa).

The chain crosses the membrane as a helical span at residues 9-29 (ILVPLVGLIFPAIAMTSLFIY).

It belongs to the PsaI family.

The protein localises to the plastid. It localises to the chloroplast thylakoid membrane. May help in the organization of the PsaL subunit. This chain is Photosystem I reaction center subunit VIII, found in Tupiella akineta (Green alga).